Here is a 659-residue protein sequence, read N- to C-terminus: 4-alpha-glucanotransferase (659 aa).

The active-site Nucleophile is glutamate 123. Aspartate 214 functions as the Proton donor in the catalytic mechanism.

This sequence belongs to the glycosyl hydrolase 57 family. As to quaternary structure, homodimer.

The enzyme catalyses Transfers a segment of a (1-&gt;4)-alpha-D-glucan to a new position in an acceptor, which may be glucose or a (1-&gt;4)-alpha-D-glucan.. Its activity is regulated as follows. Inhibited by p-chloromercuribenzoic acid, monoiodoacetic acid, mercury and nickel ions. Catalyzes the transglycosylation of maltooligosaccharides, yielding maltooligosaccharides of various lengths and glucose. Maltose and glucose can be used as acceptors in the transfer reaction. In Thermococcus litoralis (strain ATCC 51850 / DSM 5473 / JCM 8560 / NS-C), this protein is 4-alpha-glucanotransferase (jgt).